The following is a 641-amino-acid chain: Fructose-1,6-bisphosphatase class 3 (641 aa).

This sequence belongs to the FBPase class 3 family. The cofactor is Mn(2+).

It catalyses the reaction beta-D-fructose 1,6-bisphosphate + H2O = beta-D-fructose 6-phosphate + phosphate. It functions in the pathway carbohydrate biosynthesis; gluconeogenesis. The sequence is that of Fructose-1,6-bisphosphatase class 3 from Latilactobacillus sakei subsp. sakei (strain 23K) (Lactobacillus sakei subsp. sakei).